Reading from the N-terminus, the 683-residue chain is MTKSQRKILVTSALPYANGPIHLGHMLEYIQTDIWSRFQKLRGHECHYICADDAHGTPIMLKAQQMGITPEEMIAQVQKEHQQDFADFNIQFDNFHSTHSEENRILASDIYLKLRDGGYIKTKTISQLYDPEKLMFLPDRFVKGTCPKCKSEDQYGDNCDNCGATYSTTDLINPKSAVSGATPIMKDTEHFFFDLPAFEGMLKEWIQSGSLQQEMANKLNEWFEQGLKQWDISRDAPYFGFEIPDAPGKFFYVWLDAPIGYMGSFKNLCDKRDDLNFDDFWSLDSTAEVYHFIGKDIVYFHSLFWPAMLEGAGIRKPTSVYAHGYVTVNGSKMSKSKGTFIKARTYLDNLDPEYLRYYYAAKLNSRIDDLDLNLEDFAQRVNSDLVGKLVNLASRTAGFISKRFDGKLAKVTDSSLTDIFLAKSEVIAELYETREFGKAMREIMALADIANAYVADAAPWQLVKQDDKQDEAHQVCSNALNLFRILVTYLKPVLPKLAENVEGFLQLTLTWDNLGQDLAGHEIATFKALMQRIEPKSIEAIIDASKENLQATNTDAPKTEAPTQAVNQLELDPISPEISFEDFAKIDLRIARISKAEHIEKANKLLRLELDLGGDTKQVFAGIKSAYAPEDLVGKLTVMVANLAPRTMKFGDSEGMVLAAGPGGKDLFILEPHEGALPGMRVK.

The short motif at 15–25 (PYANGPIHLGH) is the 'HIGH' region element. Cysteine 146, cysteine 149, cysteine 159, and cysteine 162 together coordinate Zn(2+). Positions 332-336 (KMSKS) match the 'KMSKS' region motif. Residue lysine 335 coordinates ATP. One can recognise a tRNA-binding domain in the interval 582–683 (DFAKIDLRIA…EGALPGMRVK (102 aa)).

Belongs to the class-I aminoacyl-tRNA synthetase family. MetG type 1 subfamily. In terms of assembly, homodimer. It depends on Zn(2+) as a cofactor.

The protein resides in the cytoplasm. It carries out the reaction tRNA(Met) + L-methionine + ATP = L-methionyl-tRNA(Met) + AMP + diphosphate. In terms of biological role, is required not only for elongation of protein synthesis but also for the initiation of all mRNA translation through initiator tRNA(fMet) aminoacylation. The polypeptide is Methionine--tRNA ligase (Shewanella frigidimarina (strain NCIMB 400)).